We begin with the raw amino-acid sequence, 894 residues long: LRR receptor-like serine/threonine-protein kinase IOS1 (894 aa).

The N-terminal stretch at 1–23 is a signal peptide; that stretch reads MAFSSCFLLVLLQIFSALLLCLA. The Extracellular segment spans residues 24-515; it reads QDQSGFISLD…KKKKNTVIAP (492 aa). 14 N-linked (GlcNAc...) asparagine glycosylation sites follow: N48, N95, N137, N179, N223, N230, N260, N287, N309, N338, N399, N441, N462, and N469. LRR repeat units lie at residues 431–457 and 459–479; these read LTSL…NMET and KLIN…LLDK. The chain crosses the membrane as a helical span at residues 516–536; it reads VAASLVSVFLIGAGIVTFLIL. The Cytoplasmic portion of the chain corresponds to 537–894; the sequence is KRKKRTKLGL…FTTELNPGAR (358 aa). T577 is subject to Phosphothreonine. Residues 586-858 form the Protein kinase domain; it reads NNFERVLGRG…QVVMDLKECL (273 aa). ATP is bound by residues 592–600 and K613; that span reads LGRGGFGVV. A Phosphotyrosine modification is found at Y658. Catalysis depends on D710, which acts as the Proton acceptor. A Phosphoserine modification is found at S744. T745 and T750 each carry phosphothreonine. The residue at position 758 (Y758) is a Phosphotyrosine.

Belongs to the protein kinase superfamily. Ser/Thr protein kinase family. As to quaternary structure, homodimerization. Interacts with BAK1 and FLS2; triggers FLS2-BAK1 complex formation upon microbe-associated molecular patterns (MAMPs) treatment. Also binds to CERK1 and EFR. In terms of tissue distribution, expressed in roots, cotyledons, leaves, flowers and siliques.

It localises to the cell membrane. In terms of biological role, negatively regulates the abscisic acid (ABA) signaling pathway. Required for full susceptibility to filamentous (hemi)biotrophic oomycetes (e.g. H.arabidopsidis and P.parasitica) and fungal (e.g. E.cruciferarum) pathogens, probably by triggering the repression of ABA-sensitive COLD REGULATED and RESISTANCE TO DESICCATION genes during infection, but independently of immune responses. Involved in BAK1-dependent and BAK1-independent microbe-associated molecular patterns (MAMPs)-triggered immunity (PTI) leading to defense responses, including callose deposition and MAPK cascade activation, toward pathogenic bacteria (e.g. P.syringae). Required for chitin-mediated PTI. The sequence is that of LRR receptor-like serine/threonine-protein kinase IOS1 from Arabidopsis thaliana (Mouse-ear cress).